The following is a 95-amino-acid chain: Co-chaperonin GroES (95 aa).

This sequence belongs to the GroES chaperonin family. In terms of assembly, heptamer of 7 subunits arranged in a ring. Interacts with the chaperonin GroEL.

It localises to the cytoplasm. In terms of biological role, together with the chaperonin GroEL, plays an essential role in assisting protein folding. The GroEL-GroES system forms a nano-cage that allows encapsulation of the non-native substrate proteins and provides a physical environment optimized to promote and accelerate protein folding. GroES binds to the apical surface of the GroEL ring, thereby capping the opening of the GroEL channel. The chain is Co-chaperonin GroES from Nitratidesulfovibrio vulgaris (strain DSM 19637 / Miyazaki F) (Desulfovibrio vulgaris).